The sequence spans 268 residues: Imidazole glycerol phosphate synthase subunit HisF (268 aa).

Catalysis depends on residues D12 and D131.

The protein belongs to the HisA/HisF family. In terms of assembly, heterodimer of HisH and HisF.

The protein localises to the cytoplasm. It catalyses the reaction 5-[(5-phospho-1-deoxy-D-ribulos-1-ylimino)methylamino]-1-(5-phospho-beta-D-ribosyl)imidazole-4-carboxamide + L-glutamine = D-erythro-1-(imidazol-4-yl)glycerol 3-phosphate + 5-amino-1-(5-phospho-beta-D-ribosyl)imidazole-4-carboxamide + L-glutamate + H(+). It participates in amino-acid biosynthesis; L-histidine biosynthesis; L-histidine from 5-phospho-alpha-D-ribose 1-diphosphate: step 5/9. Functionally, IGPS catalyzes the conversion of PRFAR and glutamine to IGP, AICAR and glutamate. The HisF subunit catalyzes the cyclization activity that produces IGP and AICAR from PRFAR using the ammonia provided by the HisH subunit. This Chelativorans sp. (strain BNC1) protein is Imidazole glycerol phosphate synthase subunit HisF.